We begin with the raw amino-acid sequence, 62 residues long: Photosystem II reaction center protein H (62 aa).

Residues 30 to 50 (PVMAGIGFMLLIFLVTILQIY) form a helical membrane-spanning segment.

This sequence belongs to the PsbH family. PSII is composed of 1 copy each of membrane proteins PsbA, PsbB, PsbC, PsbD, PsbE, PsbF, PsbH, PsbI, PsbJ, PsbK, PsbL, PsbM, PsbT, PsbX, PsbY, Psb30/Ycf12, peripheral proteins PsbO, CyanoQ (PsbQ), PsbU, PsbV and a large number of cofactors. It forms dimeric complexes.

The protein localises to the cellular thylakoid membrane. Functionally, one of the components of the core complex of photosystem II (PSII), required for its stability and/or assembly. PSII is a light-driven water:plastoquinone oxidoreductase that uses light energy to abstract electrons from H(2)O, generating O(2) and a proton gradient subsequently used for ATP formation. It consists of a core antenna complex that captures photons, and an electron transfer chain that converts photonic excitation into a charge separation. The protein is Photosystem II reaction center protein H of Prochlorococcus marinus (strain MIT 9303).